The sequence spans 150 residues: Deoxyuridine 5'-triphosphate nucleotidohydrolase (150 aa).

Residues 70-72 (RSG), Asn-82, 86-88 (LID), and Met-96 each bind substrate.

This sequence belongs to the dUTPase family. Mg(2+) is required as a cofactor.

The enzyme catalyses dUTP + H2O = dUMP + diphosphate + H(+). The protein operates within pyrimidine metabolism; dUMP biosynthesis; dUMP from dCTP (dUTP route): step 2/2. Its function is as follows. This enzyme is involved in nucleotide metabolism: it produces dUMP, the immediate precursor of thymidine nucleotides and it decreases the intracellular concentration of dUTP so that uracil cannot be incorporated into DNA. This chain is Deoxyuridine 5'-triphosphate nucleotidohydrolase, found in Baumannia cicadellinicola subsp. Homalodisca coagulata.